Here is a 421-residue protein sequence, read N- to C-terminus: Vinorine synthase (421 aa).

Catalysis depends on proton acceptor residues H160 and D362.

The protein belongs to the plant acyltransferase family. Monomer. In terms of tissue distribution, mainly expressed in roots and, to a lower level, in leaves.

It catalyses the reaction 16-epivellosimine + acetyl-CoA = vinorine + CoA. Its pathway is alkaloid biosynthesis; ajmaline biosynthesis. With respect to regulation, complete inhibition by 4-(2-aminoethyl)-benzenesulfonyl fluoride (AEBSF), N-tosyl-L-phenylalanine chloromethylketone (TPCK), Hg(2+) and diethyl-pyrocarbonate (DEPC). 50% inhibition by N-(N-(L-3-trans-carboxirane-2-carbonyl)-L-leucyl)-agmanitine (E-64), N-alpha-p-tosyl-L-lysine chloromethylketone (TLCK) and phenylmethylsulfonyl fluoride (PMSF). Acetyltransferase involved in the biosynthesis of ajmaline-type monoterpenoid indole alkaloids (MIAs) natural products, important plant-derived pharmaceuticals used in the therapy of heart disorders. Catalyzes the conversion of 16-epivellosimine to vinorine, precursor of vomilenine, an intermediate chemical in the biosynthesis of ajmaline. Acts on gardneral, but not on polyneuridine aldehyde or N-methylgardneral. The sequence is that of Vinorine synthase from Rauvolfia serpentina (Serpentine wood).